Reading from the N-terminus, the 508-residue chain is MSSNLAASRRSSSSSSVAAAAAAKRPAVGEGGGGGGGKAAAGAAAAKKRVALSNISNVAAGGGAPGKAGNAKLNLAASAAPVKKGSLASGRNVGTNRASAVKSASAKPAPAISRHESATQKESVLPPKVPSIVPTAALAPVTVPCSSFVSPMHSGDSVSVDETMSTCDSMKSPEFEYIDNGDSSSVLGSLQRRANENLRISEDRDVEETKWKKDAPSPMEIDQICDVDNNYEDPQLCATLASDIYMHLREAETRKRPSTDFMETIQKDVNPSMRAILIDWLVEVAEEYRLVPDTLYLTVNYIDRYLSGNEINRQRLQLLGVACMLIAAKYEEICAPQVEEFCYITDNTYFRDEVLEMEASVLNYLKFEVTAPTAKCFLRRFVRVAQVSDEDPALHLEFLANYVAELSLLEYNLLSYPPSLVAASAIFLAKFILQPTKHPWNSTLAHYTQYKSSELSDCVKALHRLFSVGPGSNLPAIREKYTQHKYKFVAKKPCPPSIPTEFFRDATC.

Low complexity predominate over residues 1-28 (MSSNLAASRRSSSSSSVAAAAAAKRPAV). 2 disordered regions span residues 1-40 (MSSNLAASRRSSSSSSVAAAAAAKRPAVGEGGGGGGGKAA) and 82-125 (VKKG…ESVL). A compositionally biased stretch (gly residues) spans 29-39 (GEGGGGGGGKA). Low complexity predominate over residues 98–111 (ASAVKSASAKPAPA).

It belongs to the cyclin family. Cyclin AB subfamily. As to expression, expressed in the dividing region of the root cap and root apex. Expressed in the intercalary meristem of internodes and in adventitious roots under submergence conditions.

Its function is as follows. Involved in the control of the cell cycle at the G2/M (mitosis) transition. This is Cyclin-A1-1 (CYCA1-1) from Oryza sativa subsp. japonica (Rice).